A 354-amino-acid polypeptide reads, in one-letter code: Uroporphyrinogen decarboxylase (354 aa).

Residues 27–31 (RQAGR), Asp77, Tyr154, Thr209, and His327 each bind substrate.

It belongs to the uroporphyrinogen decarboxylase family. Homodimer.

The protein localises to the cytoplasm. It catalyses the reaction uroporphyrinogen III + 4 H(+) = coproporphyrinogen III + 4 CO2. It participates in porphyrin-containing compound metabolism; protoporphyrin-IX biosynthesis; coproporphyrinogen-III from 5-aminolevulinate: step 4/4. Its function is as follows. Catalyzes the decarboxylation of four acetate groups of uroporphyrinogen-III to yield coproporphyrinogen-III. This is Uroporphyrinogen decarboxylase from Salmonella dublin (strain CT_02021853).